Here is a 201-residue protein sequence, read N- to C-terminus: Peptide deformylase (201 aa).

Cys121 and His163 together coordinate Fe cation. Glu164 is an active-site residue. Residue His167 participates in Fe cation binding.

It belongs to the polypeptide deformylase family. Fe(2+) serves as cofactor.

The catalysed reaction is N-terminal N-formyl-L-methionyl-[peptide] + H2O = N-terminal L-methionyl-[peptide] + formate. Removes the formyl group from the N-terminal Met of newly synthesized proteins. Requires at least a dipeptide for an efficient rate of reaction. N-terminal L-methionine is a prerequisite for activity but the enzyme has broad specificity at other positions. This is Peptide deformylase from Synechococcus sp. (strain CC9902).